Consider the following 388-residue polypeptide: Beta-1,4-galactosyltransferase 5 (388 aa).

At 1 to 14 (MRVRRGLLRLPRRS) the chain is on the cytoplasmic side. The chain crosses the membrane as a helical; Signal-anchor for type II membrane protein span at residues 15–35 (LLAALFFFSLSSSLLYFVYVA). Topologically, residues 36–388 (PGIVNTYLFM…TPELAQVTEY (353 aa)) are lumenal. N-linked (GlcNAc...) asparagine glycosylation is found at asparagine 77, asparagine 81, asparagine 90, asparagine 111, and asparagine 128. Cysteine 114 and cysteine 158 are disulfide-bonded. Residues 169–173 (PFRNR), 208–210 (FNR), 235–236 (VD), tyrosine 264, and tryptophan 296 each bind UDP-alpha-D-galactose. The cysteines at positions 229 and 248 are disulfide-linked. Aspartate 236 contacts Mn(2+). Residue 298–301 (GEDD) coordinates N-acetyl-D-glucosamine. 329 to 330 (YH) serves as a coordination point for UDP-alpha-D-galactose. Arginine 340 serves as a coordination point for N-acetyl-D-glucosamine. Residues asparagine 364 and asparagine 373 are each glycosylated (N-linked (GlcNAc...) asparagine).

Belongs to the glycosyltransferase 7 family. (Microbial infection) Interacts with porcine reproductive and respiratory syndrome virus GP5. The cofactor is Mn(2+).

It localises to the golgi apparatus. Its subcellular location is the golgi stack membrane. It carries out the reaction a beta-D-glucosyl-(1&lt;-&gt;1')-N-acylsphing-4-enine + UDP-alpha-D-galactose = a beta-D-Gal-(1-&gt;4)-beta-D-Glc-(1&lt;-&gt;1)-Cer(d18:1(4E)) + UDP + H(+). It functions in the pathway protein modification; protein glycosylation. It participates in sphingolipid metabolism. Functionally, catalyzes the synthesis of lactosylceramide (LacCer) via the transfer of galactose from UDP-galactose to glucosylceramide (GlcCer). LacCer is the starting point in the biosynthesis of all gangliosides (membrane-bound glycosphingolipids) which play pivotal roles in the CNS including neuronal maturation and axonal and myelin formation. Plays a role in the glycosylation of BMPR1A and regulation of its protein stability. Essential for extraembryonic development during early embryogenesis. In terms of biological role, (Microbial infection) May play a role in the glycosylation of porcine reproductive and respiratory syndrome virus GP5 protein and may be involved in the regulation of viral proliferation. The chain is Beta-1,4-galactosyltransferase 5 (B4GALT5) from Sus scrofa (Pig).